The primary structure comprises 733 residues: Hexamerin (733 aa).

Residues 1–17 form the signal peptide; it reads MKTALVLILATATLAVA. Residues Asn-199, Asn-234, and Asn-431 are each glycosylated (N-linked (GlcNAc...) asparagine).

This sequence belongs to the hemocyanin family. As to quaternary structure, homohexamer.

Its subcellular location is the secreted. It localises to the extracellular space. Larval storage protein (LSP) which may serve as a store of amino acids for synthesis of adult proteins. The sequence is that of Hexamerin from Blaberus discoidalis (Tropical cockroach).